Reading from the N-terminus, the 66-residue chain is Large ribosomal subunit protein uL29 (66 aa).

Belongs to the universal ribosomal protein uL29 family.

The sequence is that of Large ribosomal subunit protein uL29 from Bartonella tribocorum (strain CIP 105476 / IBS 506).